Reading from the N-terminus, the 495-residue chain is Protein painting of fourth (495 aa).

The segment at 1–51 (MDSKRAALESGDGPDAKRLDTTDDQDKEASGGDGSQVMLAKHVAPYTGHGC) is disordered. The RRM domain maps to 215–289 (CSLYVGNIPF…RTLTVRYRRL (75 aa)). Residues 332 to 342 (ISDSDNCSDSS) show a composition bias toward low complexity. Disordered stretches follow at residues 332-358 (ISDS…INEQ), 432-451 (PVPA…KKAK), and 461-495 (GPFR…DPDP). Over residues 345–358 (GKEDGKRKKKINEQ) the composition is skewed to basic and acidic residues. Residues 351 to 367 (RKKKINEQEREIEKLKR) carry the Bipartite nuclear localization signal motif. A compositionally biased stretch (basic and acidic residues) spans 472-495 (TADEYEKDDRLEELYAQLERDPDP).

Interacts with Zeste. Weakly expressed in embryos. Expression increases during larval and pupal stages. In adults, it is predominantly expressed in males, while it is weakly expressed in females.

It localises to the nucleus. The protein resides in the chromosome. In terms of biological role, probable RNA-binding protein that specifically binds to the fourth chromosome and may bind an RNA that spreads the fourth chromosome. May be a reminiscence of X chromosome dosage compensation of ancestral Drosophila species in which the X and the fourth chromosomes are one single chromosome. In Drosophila melanogaster (Fruit fly), this protein is Protein painting of fourth (Pof).